A 489-amino-acid chain; its full sequence is Lysine--tRNA ligase (489 aa).

2 residues coordinate Mg(2+): E399 and E406.

This sequence belongs to the class-II aminoacyl-tRNA synthetase family. Homodimer. The cofactor is Mg(2+).

It localises to the cytoplasm. The catalysed reaction is tRNA(Lys) + L-lysine + ATP = L-lysyl-tRNA(Lys) + AMP + diphosphate. The protein is Lysine--tRNA ligase of Roseiflexus castenholzii (strain DSM 13941 / HLO8).